The chain runs to 757 residues: Maltose phosphorylase (757 aa).

354–355 (WD) is a binding site for substrate. The active-site Proton donor is glutamate 483. Residue 588-589 (KQ) participates in substrate binding.

The protein belongs to the glycosyl hydrolase 65 family.

It carries out the reaction D-maltose + phosphate = beta-D-glucose 1-phosphate + D-glucose. It participates in glycan degradation; maltose degradation. In terms of biological role, catalyzes the phosphorolysis of maltose, leading to the formation of glucose and glucose 1-P. In Bacillus subtilis (strain 168), this protein is Maltose phosphorylase (mdxK).